The sequence spans 66 residues: Large ribosomal subunit protein bL31 (66 aa).

C16, C18, C36, and C39 together coordinate Zn(2+).

The protein belongs to the bacterial ribosomal protein bL31 family. Type A subfamily. Part of the 50S ribosomal subunit. Zn(2+) is required as a cofactor.

In terms of biological role, binds the 23S rRNA. This Anoxybacillus flavithermus (strain DSM 21510 / WK1) protein is Large ribosomal subunit protein bL31.